Consider the following 264-residue polypeptide: Segregation and condensation protein A (264 aa).

This sequence belongs to the ScpA family. As to quaternary structure, component of a cohesin-like complex composed of ScpA, ScpB and the Smc homodimer, in which ScpA and ScpB bind to the head domain of Smc. The presence of the three proteins is required for the association of the complex with DNA.

The protein resides in the cytoplasm. In terms of biological role, participates in chromosomal partition during cell division. May act via the formation of a condensin-like complex containing Smc and ScpB that pull DNA away from mid-cell into both cell halves. This chain is Segregation and condensation protein A, found in Enterococcus faecalis (strain ATCC 700802 / V583).